Consider the following 445-residue polypeptide: Glutamate-1-semialdehyde 2,1-aminomutase (445 aa).

Residue K263 is modified to N6-(pyridoxal phosphate)lysine.

Belongs to the class-III pyridoxal-phosphate-dependent aminotransferase family. HemL subfamily. Pyridoxal 5'-phosphate is required as a cofactor.

The protein localises to the cytoplasm. The catalysed reaction is (S)-4-amino-5-oxopentanoate = 5-aminolevulinate. Its pathway is porphyrin-containing compound metabolism; protoporphyrin-IX biosynthesis; 5-aminolevulinate from L-glutamyl-tRNA(Glu): step 2/2. In Halorubrum lacusprofundi (strain ATCC 49239 / DSM 5036 / JCM 8891 / ACAM 34), this protein is Glutamate-1-semialdehyde 2,1-aminomutase.